Reading from the N-terminus, the 454-residue chain is tRNA(Ile)-lysidine synthase (454 aa).

31–36 is an ATP binding site; sequence SGGADS.

The protein belongs to the tRNA(Ile)-lysidine synthase family.

It localises to the cytoplasm. The catalysed reaction is cytidine(34) in tRNA(Ile2) + L-lysine + ATP = lysidine(34) in tRNA(Ile2) + AMP + diphosphate + H(+). Functionally, ligates lysine onto the cytidine present at position 34 of the AUA codon-specific tRNA(Ile) that contains the anticodon CAU, in an ATP-dependent manner. Cytidine is converted to lysidine, thus changing the amino acid specificity of the tRNA from methionine to isoleucine. The chain is tRNA(Ile)-lysidine synthase from Porphyromonas gingivalis (strain ATCC 33277 / DSM 20709 / CIP 103683 / JCM 12257 / NCTC 11834 / 2561).